A 160-amino-acid polypeptide reads, in one-letter code: Cyclic pyranopterin monophosphate synthase (160 aa).

Substrate-binding positions include 73–75 (LCH) and 110–111 (ME). Residue D125 is part of the active site.

Belongs to the MoaC family. In terms of assembly, homohexamer; trimer of dimers.

The catalysed reaction is (8S)-3',8-cyclo-7,8-dihydroguanosine 5'-triphosphate = cyclic pyranopterin phosphate + diphosphate. It participates in cofactor biosynthesis; molybdopterin biosynthesis. Catalyzes the conversion of (8S)-3',8-cyclo-7,8-dihydroguanosine 5'-triphosphate to cyclic pyranopterin monophosphate (cPMP). This Pseudomonas aeruginosa (strain LESB58) protein is Cyclic pyranopterin monophosphate synthase.